Consider the following 303-residue polypeptide: Foldase protein PrsA (303 aa).

An N-terminal signal peptide occupies residues 1-20 (MMKKWLLAAASLLMVVTLAG). Residue Cys-21 is the site of N-palmitoyl cysteine attachment. Cys-21 carries S-diacylglycerol cysteine lipidation. The 97-residue stretch at 137-233 (EPKVEVQHIL…YGYHVIRMIK (97 aa)) folds into the PpiC domain.

The protein belongs to the PrsA family.

The protein resides in the cell membrane. The catalysed reaction is [protein]-peptidylproline (omega=180) = [protein]-peptidylproline (omega=0). In terms of biological role, plays a major role in protein secretion by helping the post-translocational extracellular folding of several secreted proteins. This Latilactobacillus sakei subsp. sakei (strain 23K) (Lactobacillus sakei subsp. sakei) protein is Foldase protein PrsA.